Consider the following 172-residue polypeptide: Achaete-scute homolog 4 (172 aa).

The 53-residue stretch at 72 to 124 folds into the bHLH domain; that stretch reads AFLRKRNERERQRVRCVNEGYARLRDHLPRELADKRLSKVETLRAAIDYIKHL. The tract at residues 144-172 is disordered; that stretch reads QRRAECNSDGESKASSAPSPSSEPEEGGS. Basic and acidic residues predominate over residues 145–155; the sequence is RRAECNSDGES. Over residues 156–165 the composition is skewed to low complexity; sequence KASSAPSPSS.

In terms of tissue distribution, expressed in skin. 7-fold higher expression in fetal skin than in adult skin. Weak expression also detected in fetal lung, aorta and brain, and in adult stomach, kidney, ovary and breast.

The protein localises to the nucleus. Its function is as follows. Could be a transcriptional regulator involved in skin development. The protein is Achaete-scute homolog 4 (ASCL4) of Homo sapiens (Human).